The sequence spans 263 residues: Glucosamine-6-phosphate deaminase (263 aa).

The Proton acceptor; for enolization step role is filled by aspartate 67. The active-site For ring-opening step is the asparagine 136. Histidine 138 acts as the Proton acceptor; for ring-opening step in catalysis. The For ring-opening step role is filled by glutamate 143.

Belongs to the glucosamine/galactosamine-6-phosphate isomerase family. NagB subfamily. Homohexamer.

It catalyses the reaction alpha-D-glucosamine 6-phosphate + H2O = beta-D-fructose 6-phosphate + NH4(+). It participates in amino-sugar metabolism; N-acetylneuraminate degradation; D-fructose 6-phosphate from N-acetylneuraminate: step 5/5. In terms of biological role, catalyzes the reversible isomerization-deamination of glucosamine 6-phosphate (GlcN6P) to form fructose 6-phosphate (Fru6P) and ammonium ion. This is Glucosamine-6-phosphate deaminase from Cellvibrio japonicus (strain Ueda107) (Pseudomonas fluorescens subsp. cellulosa).